Here is a 252-residue protein sequence, read N- to C-terminus: Imidazole glycerol phosphate synthase subunit HisF (252 aa).

Active-site residues include Asp11 and Asp130.

This sequence belongs to the HisA/HisF family. Heterodimer of HisH and HisF.

It is found in the cytoplasm. The catalysed reaction is 5-[(5-phospho-1-deoxy-D-ribulos-1-ylimino)methylamino]-1-(5-phospho-beta-D-ribosyl)imidazole-4-carboxamide + L-glutamine = D-erythro-1-(imidazol-4-yl)glycerol 3-phosphate + 5-amino-1-(5-phospho-beta-D-ribosyl)imidazole-4-carboxamide + L-glutamate + H(+). It participates in amino-acid biosynthesis; L-histidine biosynthesis; L-histidine from 5-phospho-alpha-D-ribose 1-diphosphate: step 5/9. IGPS catalyzes the conversion of PRFAR and glutamine to IGP, AICAR and glutamate. The HisF subunit catalyzes the cyclization activity that produces IGP and AICAR from PRFAR using the ammonia provided by the HisH subunit. The chain is Imidazole glycerol phosphate synthase subunit HisF from Syntrophomonas wolfei subsp. wolfei (strain DSM 2245B / Goettingen).